The following is a 74-amino-acid chain: uncharacterized protein (74 aa).

Disordered regions lie at residues 1 to 26 and 46 to 74; these read MNGP…SGVF and ITNS…SFTQ. A helical transmembrane segment spans residues 34 to 50; that stretch reads VSNKSIMLISLKITNSP. Residues 47 to 74 show a composition bias toward low complexity; that stretch reads TNSPNSNSRGSSSSSSTSKSSSKTSFTQ.

The protein localises to the membrane. This is an uncharacterized protein from Dictyostelium discoideum (Social amoeba).